Here is a 1483-residue protein sequence, read N- to C-terminus: Cystic fibrosis transmembrane conductance regulator (1483 aa).

At 1–77 the chain is on the cytoplasmic side; the sequence is MQRSPLEKAS…KLINALRRCF (77 aa). A helical membrane pass occupies residues 78–98; the sequence is FWRFAFYGILLYLGEVTKAVQ. The ABC transmembrane type-1 1 domain occupies 81 to 365; that stretch reads FAFYGILLYL…WAVQTWYDSL (285 aa). The Extracellular portion of the chain corresponds to 99-122; the sequence is PLLLGRIIASYDPDNKQERSIAIY. Residues 123–146 traverse the membrane as a helical segment; sequence LAIGLCLLFIMRPLLLHPAIFGLH. The Cytoplasmic portion of the chain corresponds to 147–195; sequence HIGMQIRIAMFSLIYKKTLKLSSRVLDKISIGQLVSLLSNNLNKFDEGL. Residues 196–216 traverse the membrane as a helical segment; that stretch reads ALAHFVWIAPLQVTLLMGLLW. The Extracellular portion of the chain corresponds to 217–222; it reads DLLQAS. A helical membrane pass occupies residues 223-243; the sequence is AFCGLAFLIVLALVQAGLGRM. The Cytoplasmic segment spans residues 244-298; sequence IMKYRDQRAGKINERLVITSEVIENIQSVKAYCWEEAMEKIIENIRQTELKLTRK. The chain crosses the membrane as a helical span at residues 299–319; it reads AAHVRYFNSSAFFFSGFFVVS. Residues 320-339 are Extracellular-facing; sequence LSVLPYALIKTIILRKIFTT. A helical transmembrane segment spans residues 340 to 358; the sequence is ISFCIVLRMAVTRQFPWAV. Topologically, residues 359–859 are cytoplasmic; that stretch reads QTWYDSLGAI…YLRYITVHKN (501 aa). ATP contacts are provided by residues Trp-401, Ser-434, 458 to 465, and Gln-493; that span reads GSTGAGKT. The 224-residue stretch at 423–646 folds into the ABC transporter 1 domain; that stretch reads NGDNSLFFSN…RPDFSSKLMG (224 aa). Cys-524 carries the S-palmitoyl cysteine lipid modification. Ser-549 and Ser-660 each carry phosphoserine. The segment at 654 to 832 is disordered R region; that stretch reads SPERRNSIIT…EEINEEDLKE (179 aa). Ser-670 is modified (phosphoserine; by PKA). Ser-686 carries the post-translational modification Phosphoserine. A Glycyl lysine isopeptide (Lys-Gly) (interchain with G-Cter in ubiquitin) cross-link involves residue Lys-688. Residues Ser-700 and Ser-712 each carry the phosphoserine modification. Residue Thr-717 is modified to Phosphothreonine. Phosphoserine is present on residues Ser-737, Ser-768, Ser-791, Ser-796, and Ser-814. A helical transmembrane segment spans residues 860–880; it reads LIFVLIWCLVIFLAEVAVSLV. The ABC transmembrane type-1 2 domain maps to 860-1156; sequence LIFVLIWCLV…AVNSSIEVDS (297 aa). Residues 881-919 are Extracellular-facing; the sequence is VLWILRNLSSQDKGNSTQSVNSSYAVIFTSTSAYYIFYI. N-linked (GlcNAc...) asparagine glycans are attached at residues Asn-887, Asn-895, and Asn-901. Residues 920-940 traverse the membrane as a discontinuously helical segment; sequence YVGVADTLLALGLFRGLPLVH. Over 941–991 the chain is Cytoplasmic; it reads TLITVSKILHHKMLHSVLQAPMSTLNTLKAGGILNRFSKDIAILDDLLPLT. The helical transmembrane segment at 992 to 1012 threads the bilayer; it reads IFDFIQLLLIVIGAVAVVSVL. Residues 1013 to 1014 are Extracellular-facing; that stretch reads QP. Residues 1015-1035 traverse the membrane as a helical segment; that stretch reads YIFLATVPVIAAFIILRAYFL. Over 1036–1096 the chain is Cytoplasmic; it reads HTSQQLKQLE…TANWFLYLST (61 aa). A helical transmembrane segment spans residues 1097 to 1117; that stretch reads LRWFQMRMEIIFVIFFIAVTF. Residues 1118–1131 are Extracellular-facing; sequence ISILTTGEGEGTVG. A helical transmembrane segment spans residues 1132–1152; that stretch reads IILTLAMNIMGTLQWAVNSSI. Residues 1153–1483 are Cytoplasmic-facing; that stretch reads EVDSLMRSVS…TEDEVQDTRL (331 aa). Residues 1213–1446 form the ABC transporter 2 domain; it reads MTVKDLTAKY…RSAFRQAIGP (234 aa). Residues Tyr-1222 and 1247–1254 each bind ATP; that span reads GRTGSGKS. Residues 1389–1483 are interaction with GORASP2; it reads RTLKQAFADC…TEDEVQDTRL (95 aa). The S-palmitoyl cysteine moiety is linked to residue Cys-1398. The disordered stretch occupies residues 1444 to 1483; it reads IGPPERPGLLPHRLSSRQRSPSRIAALKEETEDEVQDTRL. Ser-1459 is subject to Phosphoserine. Acidic residues predominate over residues 1473-1483; the sequence is ETEDEVQDTRL. The short motif at 1481–1483 is the PDZ-binding element; the sequence is TRL.

It belongs to the ABC transporter superfamily. ABCC family. CFTR transporter (TC 3.A.1.202) subfamily. In terms of assembly, monomer; does not require oligomerization for channel activity. May form oligomers in the membrane. Interacts with SLC26A3, SLC26A6 and NHERF1. Interacts with SHANK2. Interacts with MYO6. Interacts (via C-terminus) with GOPC (via PDZ domain); this promotes CFTR internalization and thereby decreases channel activity. Interacts with SLC4A7 through NHERF1. Found in a complex with MYO5B and RAB11A. Interacts with ANO1. Interacts with SLC26A8. Interacts with AHCYL1; the interaction increases CFTR activity. Interacts with CSE1L. The core-glycosylated form interacts with GORASP2 (via PDZ GRASP-type 1 domain) in respone to ER stress. Interacts with MARCHF2; the interaction leads to CFTR ubiqtuitination and degradation. Interacts with ADGRG2. N-glycosylated. Post-translationally, phosphorylated; cAMP treatment promotes phosphorylation and activates the channel. Dephosphorylation decreases the ATPase activity (in vitro). Phosphorylation at PKA sites activates the channel. Phosphorylation at PKC sites enhances the response to phosphorylation by PKA. Phosphorylated by AMPK; this inhibits channel activity. In terms of processing, ubiquitinated, leading to its degradation in the lysosome. Deubiquitination by USP10 in early endosomes enhances its endocytic recycling to the cell membrane. Ubiquitinated by RNF185 during ER stress. Ubiquitinated by MARCHF2.

It localises to the apical cell membrane. Its subcellular location is the early endosome membrane. The protein resides in the cell membrane. It is found in the recycling endosome membrane. The protein localises to the endoplasmic reticulum membrane. It localises to the nucleus. The catalysed reaction is ATP + H2O + closed Cl(-) channel = ADP + phosphate + open Cl(-) channel.. It carries out the reaction chloride(in) = chloride(out). It catalyses the reaction hydrogencarbonate(in) = hydrogencarbonate(out). The enzyme catalyses ATP + H2O = ADP + phosphate + H(+). Functionally, epithelial ion channel that plays an important role in the regulation of epithelial ion and water transport and fluid homeostasis. Mediates the transport of chloride ions across the cell membrane. Possesses an intrinsic ATPase activity and utilizes ATP to gate its channel; the passive flow of anions through the channel is gated by cycles of ATP binding and hydrolysis by the ATP-binding domains. The ion channel is also permeable to HCO(3)(-); selectivity depends on the extracellular chloride concentration. Exerts its function also by modulating the activity of other ion channels and transporters. Contributes to the regulation of the pH and the ion content of the epithelial fluid layer. Modulates the activity of the epithelial sodium channel (ENaC) complex, in part by regulating the cell surface expression of the ENaC complex. May regulate bicarbonate secretion and salvage in epithelial cells by regulating the transporter SLC4A7. Can inhibit the chloride channel activity of ANO1. Plays a role in the chloride and bicarbonate homeostasis during sperm epididymal maturation and capacitation. The polypeptide is Cystic fibrosis transmembrane conductance regulator (Canis lupus familiaris (Dog)).